Consider the following 591-residue polypeptide: Parathyroid hormone/parathyroid hormone-related peptide receptor (591 aa).

The first 26 residues, 1-26 (MGTARIAPSLALLLCCPVLSSAYALV), serve as a signal peptide directing secretion. The Extracellular segment spans residues 27–188 (DADDVFTKEE…REREVFDRLG (162 aa)). Intrachain disulfides connect Cys-48-Cys-117, Cys-108-Cys-148, and Cys-131-Cys-170. The interval 67–104 (KGWTPASTSGKPRKEKAPGKFYPESKENKDVPTGSRRR) is disordered. Over residues 81–96 (EKAPGKFYPESKENKD) the composition is skewed to basic and acidic residues. Residues Asn-151, Asn-161, Asn-166, and Asn-176 are each glycosylated (N-linked (GlcNAc...) asparagine). Residues 189-212 (MIYTVGYSMSLASLTVAVLILAYF) form a helical membrane-spanning segment. The Cytoplasmic portion of the chain corresponds to 213–219 (RRLHCTR). Residues 220–239 (NYIHMHMFLSFMLRAASIFV) traverse the membrane as a helical segment. Residues 240–282 (KDAVLYSGFTLDEAERLTEEELHIIAQVPPPPAAAAVGYAGCR) lie on the Extracellular side of the membrane. The chain crosses the membrane as a helical span at residues 283 to 306 (VAVTFFLYFLATNYYWILVEGLYL). The Cytoplasmic portion of the chain corresponds to 307 to 320 (HSLIFMAFFSEKKY). A helical membrane pass occupies residues 321–342 (LWGFTIFGWGLPAVFVAVWVGV). Residues 343 to 361 (RATLANTGCWDLSSGHKKW) lie on the Extracellular side of the membrane. Residues 362 to 382 (IIQVPILASVVLNFILFINII) traverse the membrane as a helical segment. At 383–409 (RVLATKLRETNAGRCDTRQQYRKLLRS) the chain is on the cytoplasmic side. A helical transmembrane segment spans residues 410 to 428 (TLVLVPLFGVHYTVFMALP). Over 429 to 440 (YTEVSGTLWQIQ) the chain is Extracellular. Residues 441–463 (MHYEMLFNSFQGFFVAIIYCFCN) traverse the membrane as a helical segment. Residues 464 to 591 (GEVQAEIRKS…LLQEEWETVM (128 aa)) are Cytoplasmic-facing. Residues 474-477 (WSRW) carry the Important for interaction with G proteins motif.

This sequence belongs to the G-protein coupled receptor 2 family. Homodimer in the absence of bound ligand. Peptide hormone binding leads to dissociation of the homodimer. Post-translationally, N-glycosylated. Detected in kidney.

It is found in the cell membrane. Its function is as follows. G-protein-coupled receptor for parathyroid hormone (PTH) and for parathyroid hormone-related peptide (PTHLH). Ligand binding causes a conformation change that triggers signaling via guanine nucleotide-binding proteins (G proteins) and modulates the activity of downstream effectors, such as adenylate cyclase (cAMP). PTH1R is coupled to G(s) G alpha proteins and mediates activation of adenylate cyclase activity. PTHLH dissociates from PTH1R more rapidly than PTH; as consequence, the cAMP response induced by PTHLH decays faster than the response induced by PTH. The polypeptide is Parathyroid hormone/parathyroid hormone-related peptide receptor (Pth1r) (Mus musculus (Mouse)).